A 376-amino-acid chain; its full sequence is Flagellin B (376 aa).

The stretch at 103-129 forms a coiled coil; the sequence is SNSSSERRAIQEEVSALNDELNRIAET.

This sequence belongs to the bacterial flagellin family. In terms of assembly, heteromer of multiple flagellin subunits including FlaA, FlaB, FlaC, FlaD and FlaE.

It localises to the secreted. Its subcellular location is the bacterial flagellum. Its function is as follows. Flagellin is the subunit protein which polymerizes to form the filaments of bacterial flagella. FlaB is not essential for flagellar synthesis and motility. This is Flagellin B (flaB) from Vibrio cholerae serotype O1 (strain ATCC 39541 / Classical Ogawa 395 / O395).